The chain runs to 461 residues: Signal recognition particle receptor FtsY (461 aa).

One copy of the TPR repeat lies at 105-138 (FESLYNVAKIYHQLEKPDKALEYAQRAEKLVPYE). Residues 267–274 (GVNGSGKT), 349–353 (DTAGR), and 413–416 (TKLD) each bind GTP.

Belongs to the GTP-binding SRP family. FtsY subfamily. As to quaternary structure, part of the signal recognition particle protein translocation system, which is composed of SRP and FtsY.

The protein resides in the cell inner membrane. It is found in the cytoplasm. It carries out the reaction GTP + H2O = GDP + phosphate + H(+). Its function is as follows. Involved in targeting and insertion of nascent membrane proteins into the cytoplasmic membrane. Acts as a receptor for the complex formed by the signal recognition particle (SRP) and the ribosome-nascent chain (RNC). The sequence is that of Signal recognition particle receptor FtsY from Aquifex aeolicus (strain VF5).